The following is a 356-amino-acid chain: Nicotinate-nucleotide--dimethylbenzimidazole phosphoribosyltransferase (356 aa).

Glu-317 (proton acceptor) is an active-site residue.

It belongs to the CobT family. In terms of assembly, homodimer.

It catalyses the reaction 5,6-dimethylbenzimidazole + nicotinate beta-D-ribonucleotide = alpha-ribazole 5'-phosphate + nicotinate + H(+). The protein operates within nucleoside biosynthesis; alpha-ribazole biosynthesis; alpha-ribazole from 5,6-dimethylbenzimidazole: step 1/2. Functionally, catalyzes the synthesis of alpha-ribazole-5'-phosphate from nicotinate mononucleotide (NAMN) and 5,6-dimethylbenzimidazole (DMB). The polypeptide is Nicotinate-nucleotide--dimethylbenzimidazole phosphoribosyltransferase (Salmonella schwarzengrund (strain CVM19633)).